A 567-amino-acid polypeptide reads, in one-letter code: Periplasmic [NiFe] hydrogenase large subunit (567 aa).

A Mg(2+)-binding site is contributed by glutamate 62. The Ni(2+) site is built by cysteine 81 and cysteine 84. Residue cysteine 84 participates in Fe cation binding. Leucine 498 lines the Mg(2+) pocket. 2 residues coordinate Ni(2+): cysteine 546 and cysteine 549. Residue cysteine 549 coordinates Fe cation. Histidine 552 contributes to the Mg(2+) binding site. The propeptide occupies 553–567 (VIDGHTNEVHKFRIL).

Belongs to the [NiFe]/[NiFeSe] hydrogenase large subunit family. Heterodimer of a large and a small subunit. Ni(2+) is required as a cofactor. The cofactor is Fe cation.

Its subcellular location is the periplasm. It carries out the reaction 2 Fe(III)-[cytochrome c3] + H2 = 2 Fe(II)-[cytochrome c3] + 2 H(+). Its function is as follows. Catalyzes the reversible oxidoreduction of molecular hydrogen, in conjunction with a specific electron acceptor, cytochrome c3. This is Periplasmic [NiFe] hydrogenase large subunit (hydB) from Nitratidesulfovibrio vulgaris (strain DSM 19637 / Miyazaki F) (Desulfovibrio vulgaris).